Consider the following 154-residue polypeptide: MFGADKGTADKLDGKKLHIGIVQARFNENITNTLAAACRAELLRLGVQEKHIRHVLVPGALEVPVALQALAERDEYDALIALGCIIRGETYHFELVANESGAGVTRLALDYQVPIANAIITTENLDQALARQTEKGVDAARVAVEMANLLEELS.

Residues phenylalanine 26, 60 to 62, and 84 to 86 each bind 5-amino-6-(D-ribitylamino)uracil; these read ALE and CII. A (2S)-2-hydroxy-3-oxobutyl phosphate-binding site is contributed by 89-90; the sequence is ET. Histidine 92 serves as the catalytic Proton donor. Asparagine 117 is a 5-amino-6-(D-ribitylamino)uracil binding site. Arginine 131 lines the (2S)-2-hydroxy-3-oxobutyl phosphate pocket.

The protein belongs to the DMRL synthase family.

It carries out the reaction (2S)-2-hydroxy-3-oxobutyl phosphate + 5-amino-6-(D-ribitylamino)uracil = 6,7-dimethyl-8-(1-D-ribityl)lumazine + phosphate + 2 H2O + H(+). Its pathway is cofactor biosynthesis; riboflavin biosynthesis; riboflavin from 2-hydroxy-3-oxobutyl phosphate and 5-amino-6-(D-ribitylamino)uracil: step 1/2. Its function is as follows. Catalyzes the formation of 6,7-dimethyl-8-ribityllumazine by condensation of 5-amino-6-(D-ribitylamino)uracil with 3,4-dihydroxy-2-butanone 4-phosphate. This is the penultimate step in the biosynthesis of riboflavin. This chain is 6,7-dimethyl-8-ribityllumazine synthase, found in Acidovorax ebreus (strain TPSY) (Diaphorobacter sp. (strain TPSY)).